The chain runs to 971 residues: Valine--tRNA ligase (971 aa).

The 'HIGH' region motif lies at 55-65 (PNVTGSLHMGH). The 'KMSKS' region signature appears at 572–576 (KMSKS). Lysine 575 provides a ligand contact to ATP. Residues 906 to 933 (KAELGRLQKDLDKVQKQHDQIASKLANE) are a coiled coil.

It belongs to the class-I aminoacyl-tRNA synthetase family. ValS type 1 subfamily. Monomer.

The protein resides in the cytoplasm. The catalysed reaction is tRNA(Val) + L-valine + ATP = L-valyl-tRNA(Val) + AMP + diphosphate. Functionally, catalyzes the attachment of valine to tRNA(Val). As ValRS can inadvertently accommodate and process structurally similar amino acids such as threonine, to avoid such errors, it has a 'posttransfer' editing activity that hydrolyzes mischarged Thr-tRNA(Val) in a tRNA-dependent manner. The polypeptide is Valine--tRNA ligase (Acinetobacter baylyi (strain ATCC 33305 / BD413 / ADP1)).